The following is a 422-amino-acid chain: Tyrosine--tRNA ligase 1 (422 aa).

Tyr-36 contributes to the L-tyrosine binding site. The 'HIGH' region motif lies at 41–50; that stretch reads PTAGSLHIGH. L-tyrosine-binding residues include Tyr-173 and Gln-177. The 'KMSKS' region signature appears at 233–237; it reads KFGKT. Residue Lys-236 participates in ATP binding. The 65-residue stretch at 355–419 folds into the S4 RNA-binding domain; it reads SDVVTLLLET…GKKQFAMVKL (65 aa).

The protein belongs to the class-I aminoacyl-tRNA synthetase family. TyrS type 1 subfamily. As to quaternary structure, homodimer.

The protein resides in the cytoplasm. It catalyses the reaction tRNA(Tyr) + L-tyrosine + ATP = L-tyrosyl-tRNA(Tyr) + AMP + diphosphate + H(+). In terms of biological role, catalyzes the attachment of tyrosine to tRNA(Tyr) in a two-step reaction: tyrosine is first activated by ATP to form Tyr-AMP and then transferred to the acceptor end of tRNA(Tyr). This chain is Tyrosine--tRNA ligase 1, found in Vibrio vulnificus (strain YJ016).